The primary structure comprises 60 residues: Conotoxin Cl1.1 (60 aa).

The N-terminal stretch at Met1–Ala19 is a signal peptide. A propeptide spanning residues Val20–Gly48 is cleaved from the precursor.

Belongs to the conotoxin T superfamily. Contains 2 disulfide bonds. As to expression, expressed by the venom duct.

It localises to the secreted. This is Conotoxin Cl1.1 from Californiconus californicus (California cone).